The sequence spans 313 residues: 4-hydroxy-3-methylbut-2-enyl diphosphate reductase (313 aa).

Cys-12 provides a ligand contact to [4Fe-4S] cluster. Residues His-41 and His-74 each coordinate (2E)-4-hydroxy-3-methylbut-2-enyl diphosphate. Positions 41 and 74 each coordinate dimethylallyl diphosphate. Isopentenyl diphosphate-binding residues include His-41 and His-74. Cys-96 contacts [4Fe-4S] cluster. (2E)-4-hydroxy-3-methylbut-2-enyl diphosphate is bound at residue His-124. His-124 contacts dimethylallyl diphosphate. Position 124 (His-124) interacts with isopentenyl diphosphate. Glu-126 functions as the Proton donor in the catalytic mechanism. Thr-164 contacts (2E)-4-hydroxy-3-methylbut-2-enyl diphosphate. Residue Cys-194 participates in [4Fe-4S] cluster binding. 4 residues coordinate (2E)-4-hydroxy-3-methylbut-2-enyl diphosphate: Ser-222, Ser-223, Asn-224, and Ser-266. Positions 222, 223, 224, and 266 each coordinate dimethylallyl diphosphate. Residues Ser-222, Ser-223, Asn-224, and Ser-266 each coordinate isopentenyl diphosphate.

Belongs to the IspH family. [4Fe-4S] cluster serves as cofactor.

The enzyme catalyses isopentenyl diphosphate + 2 oxidized [2Fe-2S]-[ferredoxin] + H2O = (2E)-4-hydroxy-3-methylbut-2-enyl diphosphate + 2 reduced [2Fe-2S]-[ferredoxin] + 2 H(+). It carries out the reaction dimethylallyl diphosphate + 2 oxidized [2Fe-2S]-[ferredoxin] + H2O = (2E)-4-hydroxy-3-methylbut-2-enyl diphosphate + 2 reduced [2Fe-2S]-[ferredoxin] + 2 H(+). The protein operates within isoprenoid biosynthesis; dimethylallyl diphosphate biosynthesis; dimethylallyl diphosphate from (2E)-4-hydroxy-3-methylbutenyl diphosphate: step 1/1. Its pathway is isoprenoid biosynthesis; isopentenyl diphosphate biosynthesis via DXP pathway; isopentenyl diphosphate from 1-deoxy-D-xylulose 5-phosphate: step 6/6. Its function is as follows. Catalyzes the conversion of 1-hydroxy-2-methyl-2-(E)-butenyl 4-diphosphate (HMBPP) into a mixture of isopentenyl diphosphate (IPP) and dimethylallyl diphosphate (DMAPP). Acts in the terminal step of the DOXP/MEP pathway for isoprenoid precursor biosynthesis. The protein is 4-hydroxy-3-methylbut-2-enyl diphosphate reductase of Burkholderia pseudomallei (strain 1026b).